A 437-amino-acid polypeptide reads, in one-letter code: Adenylosuccinate synthetase (437 aa).

GTP-binding positions include 12 to 18 (GDEGKGK) and 40 to 42 (GHT). Residue Asp13 is the Proton acceptor of the active site. Mg(2+) is bound by residues Asp13 and Gly40. IMP-binding positions include 13–16 (DEGK), 38–41 (NAGH), Thr128, Arg142, Gln223, Thr238, and Arg302. His41 (proton donor) is an active-site residue. Substrate is bound at residue 298 to 304 (TTTGRRR). GTP is bound by residues Arg304, 330–332 (KLD), and 412–414 (SLG).

Belongs to the adenylosuccinate synthetase family. As to quaternary structure, homodimer. Mg(2+) serves as cofactor.

It is found in the cytoplasm. The catalysed reaction is IMP + L-aspartate + GTP = N(6)-(1,2-dicarboxyethyl)-AMP + GDP + phosphate + 2 H(+). Its pathway is purine metabolism; AMP biosynthesis via de novo pathway; AMP from IMP: step 1/2. Its function is as follows. Plays an important role in the de novo pathway of purine nucleotide biosynthesis. Catalyzes the first committed step in the biosynthesis of AMP from IMP. This Synechococcus sp. (strain RCC307) protein is Adenylosuccinate synthetase.